A 368-amino-acid chain; its full sequence is Phosphate acyltransferase (368 aa).

The disordered stretch occupies residues valine 335–alanine 368.

It belongs to the PlsX family. As to quaternary structure, homodimer. Probably interacts with PlsY.

The protein resides in the cytoplasm. It carries out the reaction a fatty acyl-[ACP] + phosphate = an acyl phosphate + holo-[ACP]. The protein operates within lipid metabolism; phospholipid metabolism. Functionally, catalyzes the reversible formation of acyl-phosphate (acyl-PO(4)) from acyl-[acyl-carrier-protein] (acyl-ACP). This enzyme utilizes acyl-ACP as fatty acyl donor, but not acyl-CoA. The sequence is that of Phosphate acyltransferase from Burkholderia vietnamiensis (strain G4 / LMG 22486) (Burkholderia cepacia (strain R1808)).